We begin with the raw amino-acid sequence, 145 residues long: Mite group 2 allergen Eur m 2 (145 aa).

An N-terminal signal peptide occupies residues 1 to 16; sequence MYKILCLSLLVAAVAA. 3 disulfide bridges follow: C24-C135, C37-C43, and C89-C94.

Belongs to the NPC2 family.

The protein localises to the secreted. The polypeptide is Mite group 2 allergen Eur m 2 (EURM2) (Euroglyphus maynei (Mayne's house dust mite)).